A 375-amino-acid chain; its full sequence is Chaperone protein DnaJ (375 aa).

Residues 5–70 (DYYEVLGVSR…QKRAAYDQFG (66 aa)) enclose the J domain. A CR-type zinc finger spans residues 131–209 (GTTVKIRVPS…CHGSGYVEEQ (79 aa)). Residues C144, C147, C161, C164, C183, C186, C197, and C200 each contribute to the Zn(2+) site. CXXCXGXG motif repeat units lie at residues 144-151 (CKSCSGSG), 161-168 (CGTCNGAG), 183-190 (CPRCRGAG), and 197-204 (CRSCHGSG).

The protein belongs to the DnaJ family. As to quaternary structure, homodimer. Zn(2+) serves as cofactor.

The protein resides in the cytoplasm. Participates actively in the response to hyperosmotic and heat shock by preventing the aggregation of stress-denatured proteins and by disaggregating proteins, also in an autonomous, DnaK-independent fashion. Unfolded proteins bind initially to DnaJ; upon interaction with the DnaJ-bound protein, DnaK hydrolyzes its bound ATP, resulting in the formation of a stable complex. GrpE releases ADP from DnaK; ATP binding to DnaK triggers the release of the substrate protein, thus completing the reaction cycle. Several rounds of ATP-dependent interactions between DnaJ, DnaK and GrpE are required for fully efficient folding. Also involved, together with DnaK and GrpE, in the DNA replication of plasmids through activation of initiation proteins. The polypeptide is Chaperone protein DnaJ (Hahella chejuensis (strain KCTC 2396)).